The chain runs to 286 residues: MRHTDRFVKKVVIERIGDQRVLAEEEDVVIKEERISLYLNGTKLMSMMSLPSDQDAHAVGFLMSEGVIEKIEDLKSVQISSDGSSVYVEALINHENITNLFKEKTLTSGCCVGVTGNLEGNVLRKFIATPMQISLERIWEGMEEFEMSSHLFHETGCVHKASLLLEDGSKITAEDIGRHNAIDKVMGKARLGRIDTEKAVLVVSGRLSMEMVVKAVMHNIPMIVSRAAATFLGIKTAQELGVTLVGFARGEKMNIYTHSGRVDLRACKRKRGVTLHAPNQSSSLLR.

Residue Cys110 is the Cysteine persulfide intermediate of the active site. 247–252 (FARGEK) lines the Mo-bis(molybdopterin guanine dinucleotide) pocket.

The protein belongs to the FdhD family.

It localises to the cytoplasm. Required for formate dehydrogenase (FDH) activity. Acts as a sulfur carrier protein that transfers sulfur from IscS to the molybdenum cofactor prior to its insertion into FDH. In Wolinella succinogenes (strain ATCC 29543 / DSM 1740 / CCUG 13145 / JCM 31913 / LMG 7466 / NCTC 11488 / FDC 602W) (Vibrio succinogenes), this protein is Sulfur carrier protein FdhD.